The primary structure comprises 302 residues: Glycine--tRNA ligase alpha subunit (302 aa).

This sequence belongs to the class-II aminoacyl-tRNA synthetase family. In terms of assembly, tetramer of two alpha and two beta subunits.

It localises to the cytoplasm. It catalyses the reaction tRNA(Gly) + glycine + ATP = glycyl-tRNA(Gly) + AMP + diphosphate. The chain is Glycine--tRNA ligase alpha subunit (glyQ) from Haemophilus influenzae (strain ATCC 51907 / DSM 11121 / KW20 / Rd).